Reading from the N-terminus, the 124-residue chain is Small ribosomal subunit protein uS13 (124 aa).

The tract at residues 98–124 (VRGQRTRCNARTRKGPRKTVGAKRKEK) is disordered.

This sequence belongs to the universal ribosomal protein uS13 family. As to quaternary structure, part of the 30S ribosomal subunit. Forms a loose heterodimer with protein S19. Forms two bridges to the 50S subunit in the 70S ribosome.

Its function is as follows. Located at the top of the head of the 30S subunit, it contacts several helices of the 16S rRNA. In the 70S ribosome it contacts the 23S rRNA (bridge B1a) and protein L5 of the 50S subunit (bridge B1b), connecting the 2 subunits; these bridges are implicated in subunit movement. Contacts the tRNAs in the A and P-sites. The protein is Small ribosomal subunit protein uS13 of Dictyoglomus thermophilum (strain ATCC 35947 / DSM 3960 / H-6-12).